A 421-amino-acid chain; its full sequence is MKQTITEKIFSDHVGKEVSAGEIIESKIDMIIGNDITTPISIKQFERSGAKKLANPDGFAIVMDHYIPTKDILSANQAKISREFAYKHDLKNYFDEKDMGIEHAILPEKGLVIPGDVIIGADSHTCTHGALGAFSTGMGSTDLAYAMITGKNWFKVPESIKVVFKGKLDKHVYGKDLILEIIRQIGVDGALYKALEFSGEVIDGLSMDDRFSMCNMAIEAGAKSGIIAVDEITKEFLKDKNLRDKPKFFYSDEGAKYDKILEIDVTNLDPVIAYPFLPSNGKSVRQAVRDDLAIDQAFIGSCTNGRLSDLRIAAQILKGKKVARKTRLIITPATQKIARAAEKEGLIDIFIEAGAVVSNPTCGACLGGYMGILGANERCISTTNRNFVGRMGDRTSEIYLANSAVVAASAIAGKIADPRDL.

The [4Fe-4S] cluster site is built by Cys-302, Cys-362, and Cys-365.

The protein belongs to the aconitase/IPM isomerase family. LeuC type 2 subfamily. As to quaternary structure, heterodimer of LeuC and LeuD. Requires [4Fe-4S] cluster as cofactor.

The enzyme catalyses (2R,3S)-3-isopropylmalate = (2S)-2-isopropylmalate. It participates in amino-acid biosynthesis; L-leucine biosynthesis; L-leucine from 3-methyl-2-oxobutanoate: step 2/4. Functionally, catalyzes the isomerization between 2-isopropylmalate and 3-isopropylmalate, via the formation of 2-isopropylmaleate. The protein is 3-isopropylmalate dehydratase large subunit of Campylobacter concisus (strain 13826).